The sequence spans 633 residues: MADNQGTEEEGTGCNGWFFVEAIVERKTGDIISDDEPEDVEDSGLDMVDFIDNSVSQVEGQENPQALLHAQQLQADVEAVQQLKRKYIGSPYVSPVANSEPCVEKDLSPRLGAISLGRRSAKAKRRLFDKAQPPPNGHTDVEAAVEVNTEGTDETETDQVQTVSGETTTDSLGRQQITELIHNTNIRVALFGMFKDLYGLSFMDLARPFKSDKTVCTDWVIAAFGIYHGITDGFKTLLEPHCLYGHIQWLTCRWGMVLLLLTRFKCGKNRLTVSKCLGMLLNIPETQMLIDPPKLRTPAAALYWYRQGLSNASEIFGTPPEWLARQTVIEYSLADSQFDLSKMVQWAYDHNYIDDSIIALEYAKLADIDENAAAFLGSNCQAKYVKDCGTMCRHYIRAQKMQMTMSQWIKHRCDLVEEEGEWKEIVRFLRYQHVDFISFMIALKQFLQGIPKHNCILLYGPPDTGKSNFAMSLISFLGGVVLSYVNSSSHFWLEPLADAKIAMLDDATTQCWNYMDIYMRNALDGNPMCFDRKHRAMVQTKCPPLIVTSNINASTDDRWRYLHSRVKCFCFPNRFPFDSNGNPVYDLSNKNWKSFFKRSWSRLALNDNDNEEEENGDPSNTFRCVPGKASRPI.

A Nuclear localization signal motif is present at residues K84–K86. 3 positions are modified to phosphoserine; by host: S90, S94, and S108. A Nuclear export signal motif is present at residues L107–L116. Positions N148–T168 are disordered. Polar residues predominate over residues D158–T168. The segment at T169–D335 is DNA-binding region. One can recognise an SF3 helicase domain in the interval V434 to V584. Residue G460–S467 coordinates ATP. Residue K541 forms a Glycyl lysine isopeptide (Lys-Gly) (interchain with G-Cter in SUMO) linkage. Residues D609–I633 form a disordered region.

The protein belongs to the papillomaviridae E1 protein family. As to quaternary structure, can form hexamers. Interacts with E2 protein; this interaction increases E1 DNA binding specificity. Interacts with host DNA polymerase subunit POLA2. Interacts with host single stranded DNA-binding protein RPA1. Interacts with host TOP1; this interaction stimulates the enzymatic activity of TOP1. Post-translationally, phosphorylated. In terms of processing, sumoylated.

It is found in the host nucleus. It catalyses the reaction Couples ATP hydrolysis with the unwinding of duplex DNA by translocating in the 3'-5' direction.. It carries out the reaction ATP + H2O = ADP + phosphate + H(+). Functionally, ATP-dependent DNA 3'-5' helicase required for initiation of viral DNA replication. It forms a complex with the viral E2 protein. The E1-E2 complex binds to the replication origin which contains binding sites for both proteins. During the initial step, a dimer of E1 interacts with a dimer of protein E2 leading to a complex that binds the viral origin of replication with high specificity. Then, a second dimer of E1 displaces the E2 dimer in an ATP-dependent manner to form the E1 tetramer. Following this, two E1 monomers are added to each half of the site, which results in the formation of two E1 trimers on the viral ori. Subsequently, two hexamers will be created. The double hexamer acts as a bi-directional helicase machinery and unwinds the viral DNA and then recruits the host DNA polymerase to start replication. This Homo sapiens (Human) protein is Replication protein E1.